A 186-amino-acid polypeptide reads, in one-letter code: Intraflagellar transport protein 27 homolog (186 aa).

GTP is bound by residues 12–19, 64–68, and 123–126; these read GDPAVGKT, DSAGK, and NKTD.

The protein belongs to the small GTPase superfamily. Rab family. Component of the IFT complex B, at least composed of IFT20, IFT25, IFT27, IFT52, IFT57, IFT74, IFT81, IFT88 and TRAF3IP1. Interacts with IFT25. Interacts with IFT70B. Interacts with RABL2/RABL2A; binding is equal in the presence of GTP or GDP. Interacts with ARL6; recognizes and binds with the GTP-free form of ARL6.

It localises to the cell projection. The protein resides in the cilium. Its subcellular location is the cytoplasm. It is found in the flagellum. In terms of biological role, small GTPase-like component of the intraflagellar transport (IFT) complex B that promotes the exit of the BBSome complex from cilia via its interaction with ARL6. Not involved in entry of the BBSome complex into cilium. Prevents aggregation of GTP-free ARL6. Required for hedgehog signaling. Forms a subcomplex within the IFT complex B with IFT25. Its role in intraflagellar transport is mainly seen in tissues rich in ciliated cells such as kidney and testis. Essential for male fertility, spermiogenesis and sperm flagella formation. Plays a role in the early development of the kidney. May be involved in the regulation of ureteric bud initiation. The polypeptide is Intraflagellar transport protein 27 homolog (IFT27) (Homo sapiens (Human)).